The primary structure comprises 87 residues: Toxin Cll5b (87 aa).

An N-terminal signal peptide occupies residues 1 to 19 (MNSLLMITACLAEIGTVWA). The region spanning 20–85 (KEGYLVNKST…TYPLPNKSCS (66 aa)) is the LCN-type CS-alpha/beta domain. 4 disulfide bridges follow: cysteine 31-cysteine 84, cysteine 35-cysteine 60, cysteine 44-cysteine 65, and cysteine 48-cysteine 67. A propeptide spans 86-87 (KK) (removed by a carboxypeptidase).

It belongs to the long (4 C-C) scorpion toxin superfamily. Sodium channel inhibitor family. Beta subfamily. Expressed by the venom gland.

The protein resides in the secreted. Its function is as follows. Beta toxins bind voltage-independently at site-4 of sodium channels (Nav) and shift the voltage of activation toward more negative potentials thereby affecting sodium channel activation and promoting spontaneous and repetitive firing. In Centruroides limpidus (Mexican scorpion), this protein is Toxin Cll5b.